The primary structure comprises 512 residues: Protein maph-9 (512 aa).

Disordered regions lie at residues 24 to 103 (ISRK…DDDF), 168 to 386 (DLSE…KNEK), and 481 to 512 (GNRL…RPFR). Low complexity-rich tracts occupy residues 30-39 (TTTTSSGSSG) and 78-95 (STLS…STAA). A compositionally biased stretch (basic and acidic residues) spans 178–200 (TDHEDPSLTFRVDKELEQSESKK). Over residues 230–239 (PQTSANLSTK) the composition is skewed to polar residues. Basic and acidic residues-rich tracts occupy residues 260-302 (KPSD…RENS) and 310-386 (VQDH…KNEK). Residues 267-429 (KEWLQKKERE…QLEESEKMTR (163 aa)) adopt a coiled-coil conformation. Residues 502-512 (PGTTTSLRPFR) show a composition bias toward polar residues.

In terms of tissue distribution, expressed in amphid and phasmid ciliated neurons.

It is found in the cell projection. The protein resides in the cilium. Its subcellular location is the cytoplasm. The protein localises to the cytoskeleton. It localises to the cilium axoneme. The polypeptide is Protein maph-9 (Caenorhabditis elegans).